The sequence spans 252 residues: Type I iodothyronine deiodinase (252 aa).

The Extracellular portion of the chain corresponds to 1 to 17 (MESLLQTIKLMLRYIQK). Residues 18 to 38 (ALILFFLFLYVVVGKVLMFLF) form a helical; Signal-anchor for type III membrane protein membrane-spanning segment. Over 39 to 252 (PQTMASVLKS…EVCSVLEKKK (214 aa)) the chain is Cytoplasmic. Residue Sec-130 is part of the active site. Sec-130 is a non-standard amino acid (selenocysteine).

Belongs to the iodothyronine deiodinase family. As to quaternary structure, predominantly monomer. Can form homodimers but homodimerization is not essential for enzyme activity.

The protein localises to the cell membrane. It localises to the endoplasmic reticulum membrane. It is found in the basolateral cell membrane. The enzyme catalyses 3,3',5-triiodo-L-thyronine + iodide + A + H(+) = L-thyroxine + AH2. It catalyses the reaction 3,3',5'-triiodo-L-thyronine + iodide + A + H(+) = L-thyroxine + AH2. It carries out the reaction 3,3'-diiodo-L-thyronine + iodide + A + H(+) = 3,3',5'-triiodo-L-thyronine + AH2. The catalysed reaction is 3,3'-diiodo-L-thyronine + iodide + A + H(+) = 3,3',5-triiodo-L-thyronine + AH2. The enzyme catalyses 3'-iodo-L-thyronine + iodide + A + H(+) = 3',5'-diiodo-L-thyronine + AH2. It catalyses the reaction 3-iodo-L-thyronine + iodide + A + H(+) = 3,5-diiodo-L-thyronine + AH2. It carries out the reaction 3-iodo-L-thyronine + iodide + A + H(+) = 3,3'-diiodo-L-thyronine + AH2. The catalysed reaction is 3,3'-diiodothyronamine + iodide + A + H(+) = 3,3',5'-triiodothyronamine + AH2. The enzyme catalyses 3'-iodothyronamine + iodide + A + H(+) = 3',5'-diiodothyronamine + AH2. It catalyses the reaction 3-iodothyronamine + iodide + A + H(+) = 3,3'-diiodothyronamine + AH2. It carries out the reaction 3,3'-diiodothyronamine + iodide + A + H(+) = 3,3',5-triiodothyronamine + AH2. The catalysed reaction is 3-iodothyronamine + iodide + A + H(+) = 3,5-diiodothyronamine + AH2. The enzyme catalyses 3,3'-diiodo-L-thyronine sulfate + iodide + A + H(+) = 3,3',5'-triiodo-L-thyronine sulfate + AH2. It catalyses the reaction 3,3',5'-triiodo-L-thyronine sulfate + iodide + A + H(+) = L-thyroxine sulfate + AH2. It carries out the reaction 3,3'-diiodo-L-thyronine sulfate + iodide + A + H(+) = 3,3',5-triiodo-L-thyronine sulfate + AH2. With respect to regulation, lacks sensitivity to 6-n-propylthiouracil. In terms of biological role, plays a crucial role in the metabolism of thyroid hormones (TH) and has specific roles in TH activation and inactivation by deiodination. Catalyzes the deiodination of L-thyroxine (T4) to 3,5,3'-triiodothyronine (T3) and 3,3',5'-triiodothyronine (rT3) to 3,3'-diiodothyronine (3,3'-T2) via outer-ring deiodination (ORD). Catalyzes the deiodiantion of T4 to rT3 and T3 to 3,3'-T2 via inner-ring deiodination (IRD). Catalyzes the deiodination of 3',5'-diiodothyronine (3',5'-T2) to 3'-monoiodothyronine (3'-T1) via ORD. Catalyzes the deiodination of 3,5-diiodothyronine (3,5-T2) to 3-monoiodothyronine (3-T1) and 3,3'-T2 to 3-T1 via IRD. Catalyzes the phenolic ring deiodinations of 3,3',5'-triiodothyronamine, 3',5'-diiodothyronamine and 3,3'-diiodothyronamine as well as tyrosyl ring deiodinations of 3,5,3'-triiodothyronamine and 3,5-diiodothyronamine. Catalyzes the deiodination of L-thyroxine sulfate and 3,3',5-triiodo-L-thyronine sulfate via IRD and of 3,3',5'-triiodo-L-thyronine sulfate via ORD. In Xenopus laevis (African clawed frog), this protein is Type I iodothyronine deiodinase (dio1).